Consider the following 135-residue polypeptide: Large ribosomal subunit protein uL16c (135 aa).

Met-1 carries the N-methylmethionine modification.

As to quaternary structure, component of the chloroplast large ribosomal subunit (LSU). Mature 70S chloroplast ribosomes of higher plants consist of a small (30S) and a large (50S) subunit. The 30S small subunit contains 1 molecule of ribosomal RNA (16S rRNA) and 24 different proteins. The 50S large subunit contains 3 rRNA molecules (23S, 5S and 4.5S rRNA) and 33 different proteins. Post-translationally, partially alpha-N-monomethylated at Met-1 (10%), whereas 90% of it is blocked to Edman degradation, probably by trimethylation.

It localises to the plastid. The protein localises to the chloroplast. In terms of biological role, component of the chloroplast ribosome (chloro-ribosome), a dedicated translation machinery responsible for the synthesis of chloroplast genome-encoded proteins, including proteins of the transcription and translation machinery and components of the photosynthetic apparatus. This is Large ribosomal subunit protein uL16c from Spinacia oleracea (Spinach).